The sequence spans 558 residues: Glucose-6-phosphate isomerase (558 aa).

Position 2 is an N-acetylalanine (alanine 2). Lysine 12 carries the N6-acetyllysine modification. Lysine 34 bears the N6-(2-hydroxyisobutyryl)lysine mark. Serine 107 is subject to Phosphoserine. Phosphothreonine is present on threonine 109. Lysine 142 carries the post-translational modification N6-acetyllysine. D-glucose 6-phosphate is bound at residue 159 to 160 (GS). At serine 185 the chain carries Phosphoserine; by CK2. 210-215 (SKTFTT) is a binding site for D-glucose 6-phosphate. Threonine 250 is subject to Phosphothreonine. Positions 354, 358, and 389 each coordinate D-glucose 6-phosphate. The active-site Proton donor is glutamate 358. Histidine 389 is a catalytic residue. Lysine 454 carries the N6-acetyllysine; alternate modification. Lysine 454 is modified (N6-malonyllysine; alternate). The residue at position 454 (lysine 454) is an N6-succinyllysine; alternate. Residue serine 455 is modified to Phosphoserine. A D-glucose 6-phosphate-binding site is contributed by lysine 519. The active site involves lysine 519.

Belongs to the GPI family. As to quaternary structure, homodimer; in the catalytically active form. Monomer in the secreted form. Phosphorylation at Ser-185 by CK2 has been shown to decrease enzymatic activity and may contribute to secretion by a non-classical secretory pathway. Post-translationally, ISGylated.

The protein localises to the cytoplasm. It localises to the secreted. It catalyses the reaction alpha-D-glucose 6-phosphate = beta-D-fructose 6-phosphate. The protein operates within carbohydrate degradation; glycolysis; D-glyceraldehyde 3-phosphate and glycerone phosphate from D-glucose: step 2/4. Its activity is regulated as follows. Strongly inhibited by erythrose 4-phosphate. Functionally, in the cytoplasm, catalyzes the conversion of glucose-6-phosphate to fructose-6-phosphate, the second step in glycolysis, and the reverse reaction during gluconeogenesis. Besides it's role as a glycolytic enzyme, also acts as a secreted cytokine: acts as an angiogenic factor (AMF) that stimulates endothelial cell motility. Acts as a neurotrophic factor, neuroleukin, for spinal and sensory neurons. It is secreted by lectin-stimulated T-cells and induces immunoglobulin secretion. The protein is Glucose-6-phosphate isomerase of Homo sapiens (Human).